A 589-amino-acid polypeptide reads, in one-letter code: NADP-dependent malic enzyme (589 aa).

The Proton donor role is filled by Tyr137. Arg190 serves as a coordination point for NAD(+). Lys208 serves as the catalytic Proton acceptor. Residues Glu280, Asp281, and Asp304 each contribute to the a divalent metal cation site. An NAD(+)-binding site is contributed by Asp304. 333 to 349 (LFLGAGEAGTGIAELIA) contributes to the NADP(+) binding site. Asn445 lines the NAD(+) pocket.

This sequence belongs to the malic enzymes family. As to quaternary structure, homotetramer. It depends on Mg(2+) as a cofactor. Requires Mn(2+) as cofactor.

The protein resides in the cytoplasm. The enzyme catalyses (S)-malate + NADP(+) = pyruvate + CO2 + NADPH. The catalysed reaction is oxaloacetate + H(+) = pyruvate + CO2. The sequence is that of NADP-dependent malic enzyme (ME1) from Phaseolus vulgaris (Kidney bean).